A 281-amino-acid chain; its full sequence is Nucleotide-binding protein Tpet_1006 (281 aa).

9–16 provides a ligand contact to ATP; that stretch reads GLSGAGKT. 58 to 61 is a binding site for GTP; the sequence is DVRS.

It belongs to the RapZ-like family.

Displays ATPase and GTPase activities. This is Nucleotide-binding protein Tpet_1006 from Thermotoga petrophila (strain ATCC BAA-488 / DSM 13995 / JCM 10881 / RKU-1).